We begin with the raw amino-acid sequence, 198 residues long: MHYPEPITKLIDSFMKLPGIGPKSAARLAFYVLDMKEDDVLDFAKALVDAKRNLSFCSVCGHITDKDPCYICADTSRDRSVICVVQESKDVIAMEKMRDFHGLYHVLHGTISPMDGIGPEDINIPDLLKRLQDDTIEEVILATNPNVEGEATAMYISRLLKPSGIKVTRIAHGLPVGGDLEYADEVTLSKAMEGRREV.

The C4-type zinc finger occupies 57–72 (CSVCGHITDKDPCYIC). The Toprim domain maps to 80–175 (SVICVVQESK…KVTRIAHGLP (96 aa)).

It belongs to the RecR family.

Functionally, may play a role in DNA repair. It seems to be involved in an RecBC-independent recombinational process of DNA repair. It may act with RecF and RecO. In Listeria monocytogenes serotype 4b (strain CLIP80459), this protein is Recombination protein RecR.